We begin with the raw amino-acid sequence, 258 residues long: MFPVRHALLCKALGCYDCCIRCLGAVPYPSLVSTLLCFTGMALFCGCGHEALAHTEVLVETYFVRNIQDYVILASFIKYFQYVIYGLASFFFLYCILLLAEGFYTTSAVKQTFGEFRSTRCGRCLSLTFIIVTYVLAVIWLAVFAFTAIPSSSSLIWHRPATTSTSWTETTPSINQHGWICMDARQYGLLPWNAMPGKACGMTLASICKTKEFFVTYDLYIAAFAGAGIALLALFLYVVATTYNYAVLRFLGRKGLRC.

Residues 1–22 are Cytoplasmic-facing; it reads MFPVRHALLCKALGCYDCCIRC. 3 S-palmitoyl cysteine lipidation sites follow: cysteine 18, cysteine 19, and cysteine 22. The helical transmembrane segment at 23–48 threads the bilayer; sequence LGAVPYPSLVSTLLCFTGMALFCGCG. Residues 49 to 82 are Extracellular-facing; that stretch reads HEALAHTEVLVETYFVRNIQDYVILASFIKYFQY. A helical transmembrane segment spans residues 83-103; it reads VIYGLASFFFLYCILLLAEGF. Over 104-128 the chain is Cytoplasmic; it reads YTTSAVKQTFGEFRSTRCGRCLSLT. Residues cysteine 121 and cysteine 124 are each lipidated (S-palmitoyl cysteine). Residues 129–149 form a helical membrane-spanning segment; it reads FIIVTYVLAVIWLAVFAFTAI. The Extracellular portion of the chain corresponds to 150 to 218; the sequence is PSSSSLIWHR…KTKEFFVTYD (69 aa). A disulfide bridge connects residues cysteine 181 and cysteine 200. A helical transmembrane segment spans residues 219–239; the sequence is LYIAAFAGAGIALLALFLYVV. Residues 240–258 lie on the Cytoplasmic side of the membrane; it reads ATTYNYAVLRFLGRKGLRC.

Belongs to the myelin proteolipid protein family. As to expression, central nervous system. Highest levels in spinal cord and medulla oblongata.

The protein localises to the cell membrane. In terms of biological role, this is the major myelin protein from the central nervous system. It plays an important role in the formation or maintenance of the multilamellar structure of myelin. May be involved in neuron and glial cell differentiation. The polypeptide is Myelin proteolipid protein (plp) (Oncorhynchus mykiss (Rainbow trout)).